The following is a 112-amino-acid chain: uncharacterized protein (112 aa).

Fe cation-binding residues include Cys39, Cys105, and Cys107.

Belongs to the HesB/IscA family. Ycf83 subfamily.

The protein localises to the plastid. The protein resides in the chloroplast. This is an uncharacterized protein from Galdieria sulphuraria (Red alga).